We begin with the raw amino-acid sequence, 354 residues long: Holliday junction branch migration complex subunit RuvB (354 aa).

The interval 4–191 (TDKLAAPARV…FGIVARLEFY (188 aa)) is large ATPase domain (RuvB-L). Residues Leu30, Arg31, Gly72, Lys75, Thr76, Thr77, 138–140 (EDY), Arg181, Tyr191, and Arg228 contribute to the ATP site. Thr76 is a binding site for Mg(2+). The small ATPAse domain (RuvB-S) stretch occupies residues 192–262 (TAEELARIVT…MADAALAMLD (71 aa)). The segment at 265–354 (RVGFDLMDRK…GDAGELFGDA (90 aa)) is head domain (RuvB-H). DNA is bound by residues Arg301, Arg320, and Arg325.

It belongs to the RuvB family. In terms of assembly, homohexamer. Forms an RuvA(8)-RuvB(12)-Holliday junction (HJ) complex. HJ DNA is sandwiched between 2 RuvA tetramers; dsDNA enters through RuvA and exits via RuvB. An RuvB hexamer assembles on each DNA strand where it exits the tetramer. Each RuvB hexamer is contacted by two RuvA subunits (via domain III) on 2 adjacent RuvB subunits; this complex drives branch migration. In the full resolvosome a probable DNA-RuvA(4)-RuvB(12)-RuvC(2) complex forms which resolves the HJ.

It localises to the cytoplasm. It catalyses the reaction ATP + H2O = ADP + phosphate + H(+). The RuvA-RuvB-RuvC complex processes Holliday junction (HJ) DNA during genetic recombination and DNA repair, while the RuvA-RuvB complex plays an important role in the rescue of blocked DNA replication forks via replication fork reversal (RFR). RuvA specifically binds to HJ cruciform DNA, conferring on it an open structure. The RuvB hexamer acts as an ATP-dependent pump, pulling dsDNA into and through the RuvAB complex. RuvB forms 2 homohexamers on either side of HJ DNA bound by 1 or 2 RuvA tetramers; 4 subunits per hexamer contact DNA at a time. Coordinated motions by a converter formed by DNA-disengaged RuvB subunits stimulates ATP hydrolysis and nucleotide exchange. Immobilization of the converter enables RuvB to convert the ATP-contained energy into a lever motion, pulling 2 nucleotides of DNA out of the RuvA tetramer per ATP hydrolyzed, thus driving DNA branch migration. The RuvB motors rotate together with the DNA substrate, which together with the progressing nucleotide cycle form the mechanistic basis for DNA recombination by continuous HJ branch migration. Branch migration allows RuvC to scan DNA until it finds its consensus sequence, where it cleaves and resolves cruciform DNA. The chain is Holliday junction branch migration complex subunit RuvB from Cupriavidus taiwanensis (strain DSM 17343 / BCRC 17206 / CCUG 44338 / CIP 107171 / LMG 19424 / R1) (Ralstonia taiwanensis (strain LMG 19424)).